A 362-amino-acid chain; its full sequence is Phospho-N-acetylmuramoyl-pentapeptide-transferase (362 aa).

10 helical membrane-spanning segments follow: residues 28 to 48 (IISF…VITW), 72 to 92 (TPTM…MVCA), 94 to 114 (LSNI…ILGL), 131 to 151 (VLHK…IIFM), 169 to 189 (FMPQ…VGTS), 200 to 220 (GLAI…AWIS), 236 to 256 (FSGE…GFLW), 264 to 284 (IFMG…IAVL), 290 to 310 (LLLI…LQVI), and 339 to 359 (IIVR…ITLK).

This sequence belongs to the glycosyltransferase 4 family. MraY subfamily. Mg(2+) is required as a cofactor.

It is found in the cell inner membrane. The enzyme catalyses UDP-N-acetyl-alpha-D-muramoyl-L-alanyl-gamma-D-glutamyl-meso-2,6-diaminopimeloyl-D-alanyl-D-alanine + di-trans,octa-cis-undecaprenyl phosphate = di-trans,octa-cis-undecaprenyl diphospho-N-acetyl-alpha-D-muramoyl-L-alanyl-D-glutamyl-meso-2,6-diaminopimeloyl-D-alanyl-D-alanine + UMP. It functions in the pathway cell wall biogenesis; peptidoglycan biosynthesis. Catalyzes the initial step of the lipid cycle reactions in the biosynthesis of the cell wall peptidoglycan: transfers peptidoglycan precursor phospho-MurNAc-pentapeptide from UDP-MurNAc-pentapeptide onto the lipid carrier undecaprenyl phosphate, yielding undecaprenyl-pyrophosphoryl-MurNAc-pentapeptide, known as lipid I. In Blochmanniella pennsylvanica (strain BPEN), this protein is Phospho-N-acetylmuramoyl-pentapeptide-transferase.